The following is an 885-amino-acid chain: Leucine--tRNA ligase (885 aa).

Positions 48-58 (PYPSGKLHMGH) match the 'HIGH' region motif. The 'KMSKS' region signature appears at 639-643 (TMSKS). Lysine 642 is an ATP binding site.

It belongs to the class-I aminoacyl-tRNA synthetase family.

It localises to the cytoplasm. It carries out the reaction tRNA(Leu) + L-leucine + ATP = L-leucyl-tRNA(Leu) + AMP + diphosphate. This Bordetella parapertussis (strain 12822 / ATCC BAA-587 / NCTC 13253) protein is Leucine--tRNA ligase.